The chain runs to 396 residues: Elongation factor Tu (396 aa).

The region spanning 10–206 (KPHVNVGTIG…ALDASIPEPK (197 aa)) is the tr-type G domain. Positions 19-26 (GHVDHGKT) are G1. 19–26 (GHVDHGKT) contributes to the GTP binding site. Threonine 26 provides a ligand contact to Mg(2+). The G2 stretch occupies residues 60–64 (GITIS). The tract at residues 81 to 84 (DCPG) is G3. GTP is bound by residues 81–85 (DCPGH) and 136–139 (NKAD). Residues 136-139 (NKAD) are G4. The segment at 174–176 (SAL) is G5.

Belongs to the TRAFAC class translation factor GTPase superfamily. Classic translation factor GTPase family. EF-Tu/EF-1A subfamily. Monomer.

The protein resides in the cytoplasm. It carries out the reaction GTP + H2O = GDP + phosphate + H(+). In terms of biological role, GTP hydrolase that promotes the GTP-dependent binding of aminoacyl-tRNA to the A-site of ribosomes during protein biosynthesis. The protein is Elongation factor Tu of Dichelobacter nodosus (strain VCS1703A).